The sequence spans 403 residues: Phosphoglycerate kinase (403 aa).

Residues 21–23 (DFN), Arg36, 59–62 (HLGR), Arg119, and Arg159 each bind substrate. ATP-binding positions include Lys214, Gly301, Glu332, and 359 to 362 (GGDS).

This sequence belongs to the phosphoglycerate kinase family. As to quaternary structure, monomer.

Its subcellular location is the cytoplasm. The enzyme catalyses (2R)-3-phosphoglycerate + ATP = (2R)-3-phospho-glyceroyl phosphate + ADP. Its pathway is carbohydrate degradation; glycolysis; pyruvate from D-glyceraldehyde 3-phosphate: step 2/5. This is Phosphoglycerate kinase from Lactobacillus gasseri (strain ATCC 33323 / DSM 20243 / BCRC 14619 / CIP 102991 / JCM 1131 / KCTC 3163 / NCIMB 11718 / NCTC 13722 / AM63).